The chain runs to 295 residues: Glutamyl-Q tRNA(Asp) synthetase (295 aa).

L-glutamate is bound by residues 9-13 (RFAPT) and E45. Positions 12-22 (PTPSGFLHFGS) match the 'HIGH' region motif. Residues C101, C103, Y115, and C119 each contribute to the Zn(2+) site. L-glutamate contacts are provided by Y172 and R190. The 'KMSKS' region motif lies at 228–232 (KLGKS). K231 contributes to the ATP binding site.

It belongs to the class-I aminoacyl-tRNA synthetase family. GluQ subfamily. Zn(2+) serves as cofactor.

Catalyzes the tRNA-independent activation of glutamate in presence of ATP and the subsequent transfer of glutamate onto a tRNA(Asp). Glutamate is transferred on the 2-amino-5-(4,5-dihydroxy-2-cyclopenten-1-yl) moiety of the queuosine in the wobble position of the QUC anticodon. The protein is Glutamyl-Q tRNA(Asp) synthetase of Pseudomonas putida (strain GB-1).